We begin with the raw amino-acid sequence, 285 residues long: Small ribosomal subunit biogenesis GTPase RsgA (285 aa).

The 155-residue stretch at 61-215 (KNQLIRPKVA…IIDSPGFSSF (155 aa)) folds into the CP-type G domain. Residues 110 to 113 (TKID) and 159 to 167 (GQTGVGKTS) each bind GTP. Cys-239, Cys-244, His-246, and Cys-254 together coordinate Zn(2+).

It belongs to the TRAFAC class YlqF/YawG GTPase family. RsgA subfamily. Monomer. Associates with 30S ribosomal subunit, binds 16S rRNA. The cofactor is Zn(2+).

It is found in the cytoplasm. In terms of biological role, one of several proteins that assist in the late maturation steps of the functional core of the 30S ribosomal subunit. Helps release RbfA from mature subunits. May play a role in the assembly of ribosomal proteins into the subunit. Circularly permuted GTPase that catalyzes slow GTP hydrolysis, GTPase activity is stimulated by the 30S ribosomal subunit. This chain is Small ribosomal subunit biogenesis GTPase RsgA, found in Mesomycoplasma hyopneumoniae (strain 7448) (Mycoplasma hyopneumoniae).